Reading from the N-terminus, the 200-residue chain is MELQVVGANALTVSETTFGREFNEALIHQVVVAYAAGARQGSRAQKTRAEVSGSGKKPWRQKGTGRARSGDIKSPIWRSGGVTFAAKPQDHSQKVNKKMYRGAIKSILSELVRQDRLVVVEKFEIDVPKTKVLVQKLKDMALTDALIITASLDENLFLAARNLYKVDVRDVQAIDPVSLIAFDKVVVTVDAVKQIEEMFA.

The segment at 43–71 (RAQKTRAEVSGSGKKPWRQKGTGRARSGD) is disordered.

It belongs to the universal ribosomal protein uL4 family. As to quaternary structure, part of the 50S ribosomal subunit.

In terms of biological role, one of the primary rRNA binding proteins, this protein initially binds near the 5'-end of the 23S rRNA. It is important during the early stages of 50S assembly. It makes multiple contacts with different domains of the 23S rRNA in the assembled 50S subunit and ribosome. Forms part of the polypeptide exit tunnel. The sequence is that of Large ribosomal subunit protein uL4 from Histophilus somni (strain 2336) (Haemophilus somnus).